A 174-amino-acid chain; its full sequence is Protein C2-DOMAIN ABA-RELATED 2 (174 aa).

The residue at position 1 (M1) is an N-acetylmethionine. The C2 domain occupies 1 to 104 (MENMLGLLRL…EAIRIQNQLG (104 aa)). Ca(2+) is bound by residues R21, D22, D27, D73, R74, D75, and D81.

Belongs to the plant CAR protein family. Binds to PYR/PYL/RCAR abscisic acid intracellular receptors in an ABA-independent manner, both at the plasma membrane and in the nucleus. It depends on Ca(2+) as a cofactor.

It is found in the cell membrane. The protein localises to the nucleus. In terms of biological role, stimulates the GTPase/ATPase activities of Obg-like ATPases. Mediates the transient calcium-dependent interaction of PYR/PYL/RCAR abscisic acid (ABA) receptors with the plasma membrane and thus regulates ABA sensitivity. The sequence is that of Protein C2-DOMAIN ABA-RELATED 2 from Arabidopsis thaliana (Mouse-ear cress).